A 131-amino-acid chain; its full sequence is Large ribosomal subunit protein bL17 (131 aa).

This sequence belongs to the bacterial ribosomal protein bL17 family. As to quaternary structure, part of the 50S ribosomal subunit. Contacts protein L32.

The polypeptide is Large ribosomal subunit protein bL17 (Hamiltonella defensa subsp. Acyrthosiphon pisum (strain 5AT)).